The sequence spans 94 residues: Integration host factor subunit beta (94 aa).

Belongs to the bacterial histone-like protein family. Heterodimer of an alpha and a beta chain.

Its function is as follows. This protein is one of the two subunits of integration host factor, a specific DNA-binding protein that functions in genetic recombination as well as in transcriptional and translational control. The protein is Integration host factor subunit beta of Escherichia coli O127:H6 (strain E2348/69 / EPEC).